The following is a 246-amino-acid chain: B-cell receptor-associated protein 31 (246 aa).

The Lumenal segment spans residues 2–6 (SLQWT). Residues 7–27 (AVATFLYAEVFVVLLLCIPFI) form a helical membrane-spanning segment. The Cytoplasmic portion of the chain corresponds to 28-43 (SPKRWQKIFKSRLVEL). Residues 44–64 (LVSYGNTFFVVLIVILVLLVI) form a helical membrane-spanning segment. The Lumenal segment spans residues 65–102 (DAVREIRKYDDVTEKVNLQNNPGAMEHFHMKLFRAQRN). Residues 103-123 (LYIAGFSLLLSFLLRRLVTLI) traverse the membrane as a helical segment. Residues 124–246 (SQQATLLASN…VDGPMDKKEE (123 aa)) lie on the Cytoplasmic side of the membrane. Residues 165-237 (GGKLDVGNAE…EEHAKLQAAV (73 aa)) adopt a coiled-coil conformation. The Di-lysine motif motif lies at 243-246 (KKEE).

This sequence belongs to the BCAP29/BCAP31 family. Homodimer and heterodimer with BCAP29. Binds CASP8 (isoform 9) as a complex containing BCAP31, BCAP29, BCL2 and/or BCL2L1. Forms a complex (via C-terminus) with TOMM40 which mediates the translocation of components of the mitochondrial membrane respiratory chain NADH dehydrogenase (Complex I) from the cytosol to the mitochondria; within the complex BCAP31 interacts directly with unprocessed and processed NDUFS4 and NDUFB11. Interacts with VDAC1. Interacts with VAMP3, VAMP1 and membrane IgD immunoglobulins. Interacts with HACD2. Interacts with DNM1L; may form part of a larger protein complex at the endoplasmic reticulum-mitochondrial interface during mitochondrial fission. In terms of assembly, (Microbial infection) Interacts (via C-terminus) with HRSV membrane protein SH; this interaction is direct. Post-translationally, cleaved by CASP8 and other caspases. As to expression, ubiquitous. Highly expressed in neurons and discrete endocrine cells.

It is found in the endoplasmic reticulum membrane. The protein localises to the endoplasmic reticulum-Golgi intermediate compartment membrane. Functions as a chaperone protein. Is one of the most abundant endoplasmic reticulum (ER) proteins. Plays a role in the export of secreted proteins in the ER, the recognition of abnormally folded protein and their targeting to the ER associated-degradation (ERAD). Also serves as a cargo receptor for the export of transmembrane proteins. Plays a role in the assembly of the mitochondrial membrane respiratory chain NADH dehydrogenase (Complex I) by stimulating the translocation of NDUFS4 and NDUFB11 from the cytosol to the mitochondria via interaction with TOMM40. In response to ER stress, delocalizes from the ER-mitochondria contact sites and binds BCL2. May be involved in CASP8-mediated apoptosis. In Homo sapiens (Human), this protein is B-cell receptor-associated protein 31.